A 615-amino-acid polypeptide reads, in one-letter code: Vitamin B12 transporter BtuB (615 aa).

A signal peptide spans 1 to 20 (MIKKVSLMTALSVTAFSGWA). The TonB box signature appears at 25–32 (DSLVVTAN). A TBDR plug domain is found at 37–151 (PANTVLAPTS…IGGVVNIITT (115 aa)). Residues Ser-84, Asn-91, and 109–110 (VT) contribute to the cyanocob(III)alamin site. The TBDR beta-barrel domain occupies 154–615 (KDGTTLNAGV…EYTLSGSYTF (462 aa)). Transmembrane regions (beta stranded) follow at residues 157–164 (TTLNAGVG), 168–177 (YQNYGGSTQQ), and 183–194 (TRVTLAGDYTYT). Positions 198, 210, 212, and 214 each coordinate Ca(2+). Beta stranded transmembrane passes span 216 to 226 (YMNKTIYGALE) and 231 to 247 (DQWS…NRTA). Tyr-248 and Asp-249 together coordinate Ca(2+). Ala-250 lines the cyanocob(III)alamin pocket. Residue Asp-262 participates in Ca(2+) binding. 17 beta stranded membrane-spanning segments follow: residues 264–278 (RQLY…LRFN), 280–297 (GIFH…KDYN), 310–326 (TLDE…NSVD), 329–338 (HGNVGAGVDW), 354–370 (TNLR…QKFG), 372–382 (FTLEGAARSDD), 386–401 (FGRH…WEFI), 404–418 (YRFI…KAPN), 435–444 (ESKQWEGAFE), 450–459 (VSWRVSAYRN), 474–491 (YYNV…TASF), 495–510 (PLTH…ARNA), 518–530 (RRAK…QLDT), 536–551 (DWSL…YDTD), 559–573 (KVKM…LAVS), 586–597 (IANLFDKDYETV), and 603–615 (AGRE…SYTF). Thr-310 lines the cyanocob(III)alamin pocket. Arg-518 lines the cyanocob(III)alamin pocket. The TonB C-terminal box signature appears at 598–615 (YGYETAGREYTLSGSYTF).

This sequence belongs to the TonB-dependent receptor family. BtuB (TC 1.B.14.3.1) subfamily.

The protein resides in the cell outer membrane. Involved in the active translocation of vitamin B12 (cyanocobalamin) across the outer membrane to the periplasmic space. It derives its energy for transport by interacting with the trans-periplasmic membrane protein TonB. This chain is Vitamin B12 transporter BtuB, found in Enterobacter sp. (strain 638).